Here is an 831-residue protein sequence, read N- to C-terminus: uncharacterized protein (831 aa).

Residues 285 to 311 are disordered; it reads ALNLKRQQLKEEQKEQQSTGDRSDVST. Position 470–477 (470–477) interacts with ATP; sequence GDTGNGKS.

This is an uncharacterized protein from Bacillus subtilis (strain 168).